Consider the following 275-residue polypeptide: 2-dehydro-3-deoxyphosphooctonate aldolase (275 aa).

Belongs to the KdsA family.

It is found in the cytoplasm. It carries out the reaction D-arabinose 5-phosphate + phosphoenolpyruvate + H2O = 3-deoxy-alpha-D-manno-2-octulosonate-8-phosphate + phosphate. It functions in the pathway carbohydrate biosynthesis; 3-deoxy-D-manno-octulosonate biosynthesis; 3-deoxy-D-manno-octulosonate from D-ribulose 5-phosphate: step 2/3. Its pathway is bacterial outer membrane biogenesis; lipopolysaccharide biosynthesis. In Protochlamydia amoebophila (strain UWE25), this protein is 2-dehydro-3-deoxyphosphooctonate aldolase.